Consider the following 143-residue polypeptide: uncharacterized protein (143 aa).

The signal sequence occupies residues 1 to 16 (MSRNRLFLVAGSLAVA). Residues 114–134 (GAYVFLGPGFTPGSPSGGSGG) form a helical membrane-spanning segment.

The protein resides in the membrane. This is an uncharacterized protein from Mycobacterium tuberculosis (strain CDC 1551 / Oshkosh).